The sequence spans 195 residues: Nicotinamide riboside kinase 2 (195 aa).

9-17 (GVTNGGKTT) contacts ATP. Mg(2+)-binding residues include threonine 16 and aspartate 35. The active-site Proton acceptor is aspartate 35. Substrate is bound by residues 35 to 38 (DDFF) and 54 to 55 (WD). Arginine 130 contributes to the ATP binding site. Substrate-binding positions include arginine 131 and 136–137 (YM). Residues 134 to 136 (RTY) and 174 to 176 (KSP) contribute to the ATP site.

It belongs to the uridine kinase family. NRK subfamily. Monomer. Interacts with ITGB1 alone or when associated with alpha-7, but not with alpha-5. Expressed in skeletal muscle (at protein level).

It catalyses the reaction beta-nicotinamide D-riboside + ATP = beta-nicotinamide D-ribonucleotide + ADP + H(+). The enzyme catalyses beta-D-ribosylnicotinate + ATP = nicotinate beta-D-ribonucleotide + ADP + H(+). Its pathway is cofactor biosynthesis; NAD(+) biosynthesis. Its function is as follows. Catalyzes the phosphorylation of nicotinamide riboside (NR) and nicotinic acid riboside (NaR) to form nicotinamide mononucleotide (NMN) and nicotinic acid mononucleotide (NaMN). Reduces laminin matrix deposition and cell adhesion to laminin, but not to fibronectin. Involved in the regulation of PXN at the protein level and of PXN tyrosine phosphorylation. May play a role in the regulation of terminal myogenesis. The sequence is that of Nicotinamide riboside kinase 2 (Nmrk2) from Mus musculus (Mouse).